The sequence spans 581 residues: Aspartate--tRNA ligase (581 aa).

Glu170 is a binding site for L-aspartate. The segment at 194–197 (QLFK) is aspartate. Arg216 is a binding site for L-aspartate. ATP-binding positions include 216–218 (RDE) and Gln225. His439 contacts L-aspartate. Glu468 contributes to the ATP binding site. Arg475 is an L-aspartate binding site. Residue 520-523 (GFDR) participates in ATP binding.

It belongs to the class-II aminoacyl-tRNA synthetase family. Type 1 subfamily. In terms of assembly, homodimer.

It localises to the cytoplasm. The enzyme catalyses tRNA(Asp) + L-aspartate + ATP = L-aspartyl-tRNA(Asp) + AMP + diphosphate. Its function is as follows. Catalyzes the attachment of L-aspartate to tRNA(Asp) in a two-step reaction: L-aspartate is first activated by ATP to form Asp-AMP and then transferred to the acceptor end of tRNA(Asp). This Thermosipho melanesiensis (strain DSM 12029 / CIP 104789 / BI429) protein is Aspartate--tRNA ligase.